The chain runs to 308 residues: D-alanine--D-alanine ligase (308 aa).

In terms of domain architecture, ATP-grasp spans 104–301 (KQIWQGSDLP…FDELCVAILE (198 aa)). Residue 130-185 (IAELGLPVIIKPVHEGSSVGMSKVEKAEDFAAAIEKATQHDAVVMAEKWITGREFT) coordinates ATP. Residues Asp-255, Glu-268, and Asn-270 each contribute to the Mg(2+) site.

This sequence belongs to the D-alanine--D-alanine ligase family. The cofactor is Mg(2+). Mn(2+) is required as a cofactor.

It localises to the cytoplasm. It catalyses the reaction 2 D-alanine + ATP = D-alanyl-D-alanine + ADP + phosphate + H(+). It functions in the pathway cell wall biogenesis; peptidoglycan biosynthesis. Its function is as follows. Cell wall formation. The sequence is that of D-alanine--D-alanine ligase from Acinetobacter baumannii (strain SDF).